The sequence spans 283 residues: Rhomboid-like protease 2 (283 aa).

Polar residues predominate over residues 1-11; it reads MANIRTLSDYA. Residues 1-26 are disordered; the sequence is MANIRTLSDYASSPPRGSSALEGEVG. The next 3 membrane-spanning stretches (helical) occupy residues 62–82, 114–134, and 149–169; these read IIIISFVQIAVYIASLAAGLA, ICPLFLHLNLFHILMNLWVQI, and LLAVYFGVGVLANMISAAVLF. The active-site Nucleophile is the S178. 4 helical membrane-spanning segments follow: residues 179–199, 205–225, 227–247, and 260–280; these read TAVFALIGVQLAELALIWHAI, AIISVCICLFFVFVSSFGSHM, SVGHIGGLVMGFAAGIWLNEN, and LTSQVALAAAPILSCIFIFLV. Residue H230 is part of the active site.

The protein belongs to the peptidase S54 family.

The protein localises to the membrane. It catalyses the reaction Cleaves type-1 transmembrane domains using a catalytic dyad composed of serine and histidine that are contributed by different transmembrane domains.. Its function is as follows. Serine protease involved in intramembrane proteolysis and the subsequent release of polypeptides from their membrane anchors. The protein is Rhomboid-like protease 2 (ROM2) of Toxoplasma gondii.